Consider the following 424-residue polypeptide: Glutamyl-tRNA reductase (424 aa).

Residues 51–54, S99, 104–106, and Q110 contribute to the substrate site; these read TCNR and EDQ. C52 (nucleophile) is an active-site residue. Residue 179–184 coordinates NADP(+); sequence GTGEMG.

Belongs to the glutamyl-tRNA reductase family. Homodimer.

It carries out the reaction (S)-4-amino-5-oxopentanoate + tRNA(Glu) + NADP(+) = L-glutamyl-tRNA(Glu) + NADPH + H(+). Its pathway is porphyrin-containing compound metabolism; protoporphyrin-IX biosynthesis; 5-aminolevulinate from L-glutamyl-tRNA(Glu): step 1/2. Catalyzes the NADPH-dependent reduction of glutamyl-tRNA(Glu) to glutamate 1-semialdehyde (GSA). This is Glutamyl-tRNA reductase from Methanospirillum hungatei JF-1 (strain ATCC 27890 / DSM 864 / NBRC 100397 / JF-1).